The sequence spans 483 residues: O-acetyltransferase pboB (483 aa).

Belongs to the fumigaclavine B O-acetyltransferase family. Monomer.

It functions in the pathway secondary metabolite biosynthesis. In terms of biological role, O-acetyltransferase; part of the gene cluster that mediates the biosynthesis of protubonine B, a hydroxylated and diacetylated cyclo-L-Trp-L-Leu derivative. Within the pathway, pboB catalyzes the acetylation of protubonine C at N-1 of the indoline ring to produce protubonine B. The first step of the protubonine B synthesis is performed by the nonribosomal peptide synthetase pboA that catalyzes the formation of cyclo-L-Trp-L-Leu by condensing L-Leu with L-Trp. The flavin-dependent monooxygenase pboD is responsible for hydroxylation at C-3 of the indole ring and subsequent formation of the pyrrolidine ring, leadind to protubonine D. Protubonine D is further diacetylated by two acetyltransferases, pboB and pboC, to form the final product protubonine B via protubonine C. In Aspergillus ustus, this protein is O-acetyltransferase pboB.